Reading from the N-terminus, the 423-residue chain is COP9 signalosome complex subunit 3 (423 aa).

The region spanning 197–365 (NFERALYFYE…GMVCFHDNPE (169 aa)) is the PCI domain. Positions 403-423 (FVQKSMGSQDDDSGSKPSSYS) are disordered.

The protein belongs to the CSN3 family. Component of the CSN complex, probably composed of cops1, cops2, cops3, cops4, cops5, cops6, cops7, cops8 and cops9.

Its subcellular location is the cytoplasm. The protein resides in the nucleus. In terms of biological role, component of the COP9 signalosome complex (CSN), a complex involved in various cellular and developmental processes. The CSN complex is an essential regulator of the ubiquitin (Ubl) conjugation pathway by mediating the deneddylation of the cullin subunits of E3 ligase complexes, leading to modify the Ubl ligase activity. This chain is COP9 signalosome complex subunit 3 (cops3), found in Xenopus tropicalis (Western clawed frog).